Consider the following 209-residue polypeptide: Type III pantothenate kinase (209 aa).

Asp5–Asn12 provides a ligand contact to ATP. Substrate contacts are provided by residues Tyr68 and Gly72–Arg75. Residue Asp74 is the Proton acceptor of the active site. A K(+)-binding site is contributed by Asp89. Residue Ser92 participates in ATP binding. Thr144 provides a ligand contact to substrate.

The protein belongs to the type III pantothenate kinase family. Homodimer. NH4(+) serves as cofactor. The cofactor is K(+).

It localises to the cytoplasm. The enzyme catalyses (R)-pantothenate + ATP = (R)-4'-phosphopantothenate + ADP + H(+). It participates in cofactor biosynthesis; coenzyme A biosynthesis; CoA from (R)-pantothenate: step 1/5. Functionally, catalyzes the phosphorylation of pantothenate (Pan), the first step in CoA biosynthesis. This is Type III pantothenate kinase from Campylobacter jejuni (strain RM1221).